Here is a 235-residue protein sequence, read N- to C-terminus: Cytidylate kinase (235 aa).

16 to 24 (GPAASGKST) is an ATP binding site.

This sequence belongs to the cytidylate kinase family. Type 1 subfamily.

It localises to the cytoplasm. The catalysed reaction is CMP + ATP = CDP + ADP. It catalyses the reaction dCMP + ATP = dCDP + ADP. This is Cytidylate kinase from Chloroherpeton thalassium (strain ATCC 35110 / GB-78).